Here is a 238-residue protein sequence, read N- to C-terminus: Ribonuclease PH (238 aa).

Phosphate-binding positions include arginine 86 and 124–126; that span reads GTR.

Belongs to the RNase PH family. In terms of assembly, homohexameric ring arranged as a trimer of dimers.

The catalysed reaction is tRNA(n+1) + phosphate = tRNA(n) + a ribonucleoside 5'-diphosphate. In terms of biological role, phosphorolytic 3'-5' exoribonuclease that plays an important role in tRNA 3'-end maturation. Removes nucleotide residues following the 3'-CCA terminus of tRNAs; can also add nucleotides to the ends of RNA molecules by using nucleoside diphosphates as substrates, but this may not be physiologically important. Probably plays a role in initiation of 16S rRNA degradation (leading to ribosome degradation) during starvation. This is Ribonuclease PH from Hahella chejuensis (strain KCTC 2396).